A 96-amino-acid chain; its full sequence is UPF0235 protein YE3436 (96 aa).

This sequence belongs to the UPF0235 family.

This Yersinia enterocolitica serotype O:8 / biotype 1B (strain NCTC 13174 / 8081) protein is UPF0235 protein YE3436.